A 144-amino-acid chain; its full sequence is Cytochrome c oxidase subunit 4 isoform 1, mitochondrial (144 aa).

Residues 1 to 73 lie on the Mitochondrial matrix side of the membrane; sequence SVVKSEDFSL…SFAEMNRGSN (73 aa). K4 is modified (N6-acetyllysine; alternate). N6-succinyllysine; alternate is present on K4. K28 is modified (N6-acetyllysine). S31 and S33 each carry phosphoserine. K35 is subject to N6-acetyllysine; alternate. Residue K35 is modified to N6-succinyllysine; alternate. K42 carries the post-translational modification N6-acetyllysine. A helical membrane pass occupies residues 74 to 99; the sequence is EWKTVVGGAMFFIGFTALIIMWQKRH. The Mitochondrial intermembrane segment spans residues 100 to 144; that stretch reads VYGPLPQSFDKEWVAKQTKRMLDMKVNPIQGLASKWDYEKNEWKK.

Belongs to the cytochrome c oxidase IV family. Component of the cytochrome c oxidase (complex IV, CIV), a multisubunit enzyme composed of 14 subunits. The complex is composed of a catalytic core of 3 subunits MT-CO1, MT-CO2 and MT-CO3, encoded in the mitochondrial DNA, and 11 supernumerary subunits COX4I, COX5A, COX5B, COX6A, COX6B, COX6C, COX7A, COX7B, COX7C, COX8 and NDUFA4, which are encoded in the nuclear genome. The complex exists as a monomer or a dimer and forms supercomplexes (SCs) in the inner mitochondrial membrane with NADH-ubiquinone oxidoreductase (complex I, CI) and ubiquinol-cytochrome c oxidoreductase (cytochrome b-c1 complex, complex III, CIII), resulting in different assemblies (supercomplex SCI(1)III(2)IV(1) and megacomplex MCI(2)III(2)IV(2)). Interacts with PHB2; the interaction decreases in absence of SPHK2. Interacts with AFG1L. Interacts with ABCB7; this interaction allows the regulation of cellular iron homeostasis and cellular reactive oxygen species (ROS) levels in cardiomyocytes. Interacts with FLVCR2; this interaction occurs in the absence of heme and is disrupted upon heme binding. Interacts with IRGC.

It is found in the mitochondrion inner membrane. It functions in the pathway energy metabolism; oxidative phosphorylation. Its function is as follows. Component of the cytochrome c oxidase, the last enzyme in the mitochondrial electron transport chain which drives oxidative phosphorylation. The respiratory chain contains 3 multisubunit complexes succinate dehydrogenase (complex II, CII), ubiquinol-cytochrome c oxidoreductase (cytochrome b-c1 complex, complex III, CIII) and cytochrome c oxidase (complex IV, CIV), that cooperate to transfer electrons derived from NADH and succinate to molecular oxygen, creating an electrochemical gradient over the inner membrane that drives transmembrane transport and the ATP synthase. Cytochrome c oxidase is the component of the respiratory chain that catalyzes the reduction of oxygen to water. Electrons originating from reduced cytochrome c in the intermembrane space (IMS) are transferred via the dinuclear copper A center (CU(A)) of subunit 2 and heme A of subunit 1 to the active site in subunit 1, a binuclear center (BNC) formed by heme A3 and copper B (CU(B)). The BNC reduces molecular oxygen to 2 water molecules using 4 electrons from cytochrome c in the IMS and 4 protons from the mitochondrial matrix. The chain is Cytochrome c oxidase subunit 4 isoform 1, mitochondrial (COX4I1) from Pongo pygmaeus (Bornean orangutan).